Consider the following 296-residue polypeptide: GTP cyclohydrolase FolE2 (296 aa).

It belongs to the GTP cyclohydrolase IV family.

It catalyses the reaction GTP + H2O = 7,8-dihydroneopterin 3'-triphosphate + formate + H(+). Its pathway is cofactor biosynthesis; 7,8-dihydroneopterin triphosphate biosynthesis; 7,8-dihydroneopterin triphosphate from GTP: step 1/1. Functionally, converts GTP to 7,8-dihydroneopterin triphosphate. The protein is GTP cyclohydrolase FolE2 of Delftia acidovorans (strain DSM 14801 / SPH-1).